The chain runs to 373 residues: Glutamine synthetase (373 aa).

An N-acetylalanine modification is found at A2. The tract at residues 2 to 25 (ATSASSHLNKGIKQVYMALPQGDK) is required for glutamine-induced ubiquitination by CRL4(CRBN) and proteasomal degradation. N6-acetyllysine is present on residues K11 and K14. The GS beta-grasp domain maps to 26–106 (VQAMYIWIDG…VFCEVFKYNR (81 aa)). Phosphotyrosine is present on Y104. The region spanning 113–373 (LRHTCKRIMD…TGDEPFQYKN (261 aa)) is the GS catalytic domain. Residue E134 coordinates ATP. The Mn(2+) site is built by E134, E136, E196, and E203. Residue 203 to 208 (EFQIGP) coordinates ATP. 246 to 247 (NW) contacts L-glutamate. H253 is a binding site for Mn(2+). ATP contacts are provided by residues 255–257 (NFS), R319, and R324. R319 contacts L-glutamate. 336 to 338 (YFE) is an ADP binding site. E338 contributes to the Mn(2+) binding site. R340 is a binding site for L-glutamate. A Phosphoserine modification is found at S343.

It belongs to the glutamine synthetase family. As to quaternary structure, decamer; composed of two pentamers. Interacts with PALMD. Interacts with RHOJ. Interacts with BEST2; this interaction tethers a fraction of GLUL to the membrane, causing a decrease of cytosolic glutamine synthase (GS) activity and inhibits the chloride channel activity of BEST2 by affecting the gating at the aperture in the absence of intracellular glutamate. The cofactor is Mg(2+). Mn(2+) serves as cofactor. Palmitoylated; undergoes autopalmitoylation. In terms of processing, acetylated by EP300/p300; acetylation is stimulated by increased glutamine levels and promotes ubiquitin-mediated proteasomal degradation. Post-translationally, ubiquitinated by ZNRF1. Ubiquitinated by the DCX (DDB1-CUL4-X-box) E3 ubiquitin-protein ligase complex called CRL4(CRBN), leading to proteasomal degradation.

It is found in the cytoplasm. Its subcellular location is the cytosol. The protein localises to the microsome. It localises to the mitochondrion. The protein resides in the cell membrane. It carries out the reaction L-glutamate + NH4(+) + ATP = L-glutamine + ADP + phosphate + H(+). The catalysed reaction is L-cysteinyl-[protein] + hexadecanoyl-CoA = S-hexadecanoyl-L-cysteinyl-[protein] + CoA. Its activity is regulated as follows. Glutamine synthetase activity is inhibited by methionine sulfoximine (MSO). Glutamine synthetase that catalyzes the ATP-dependent conversion of glutamate and ammonia to glutamine. Its role depends on tissue localization: in the brain, it regulates the levels of toxic ammonia and converts neurotoxic glutamate to harmless glutamine, whereas in the liver, it is one of the enzymes responsible for the removal of ammonia. Plays a key role in ammonium detoxification during erythropoiesis: the glutamine synthetase activity is required to remove ammonium generated by porphobilinogen deaminase (HMBS) during heme biosynthesis to prevent ammonium accumulation and oxidative stress. Essential for proliferation of fetal skin fibroblasts. Independently of its glutamine synthetase activity, required for endothelial cell migration during vascular development. Involved in angiogenesis by regulating membrane localization and activation of the GTPase RHOJ, possibly by promoting RHOJ palmitoylation. May act as a palmitoyltransferase for RHOJ: able to autopalmitoylate and then transfer the palmitoyl group to RHOJ. Plays a role in ribosomal 40S subunit biogenesis. Through the interaction with BEST2, inhibits BEST2 channel activity by affecting the gating at the aperture in the absence of intracellular L-glutamate, but sensitizes BEST2 to intracellular L-glutamate, which promotes the opening of BEST2 and thus relieves its inhibitory effect on BEST2. The polypeptide is Glutamine synthetase (Bos taurus (Bovine)).